We begin with the raw amino-acid sequence, 83 residues long: Small ribosomal subunit protein uS17 (83 aa).

Belongs to the universal ribosomal protein uS17 family. Part of the 30S ribosomal subunit.

Its function is as follows. One of the primary rRNA binding proteins, it binds specifically to the 5'-end of 16S ribosomal RNA. The sequence is that of Small ribosomal subunit protein uS17 from Campylobacter hominis (strain ATCC BAA-381 / DSM 21671 / CCUG 45161 / LMG 19568 / NCTC 13146 / CH001A).